The primary structure comprises 1214 residues: Filamin-A-interacting protein 1 (1214 aa).

The segment covering 1–15 (MRSRNQGGESSSNGH) has biased composition (polar residues). Positions 1 to 73 (MRSRNQGGES…ESEKKTKKPL (73 aa)) are disordered. 2 stretches are compositionally biased toward basic and acidic residues: residues 32–47 (PSED…KGED) and 61–73 (PSGE…KKPL). At serine 138 the chain carries Phosphoserine. 2 coiled-coil regions span residues 192–581 (DYMN…KLRS) and 624–778 (PEDN…ELEL). Disordered stretches follow at residues 875–898 (KREN…GHPG) and 949–976 (KPRI…GPER). Serine 979 carries the phosphoserine modification. The disordered stretch occupies residues 1104–1192 (VSTGTVLRSP…TKFQPRAETQ (89 aa)). The segment covering 1126–1140 (VTSTITITPVTTSST) has biased composition (low complexity). Positions 1141-1157 (RGTQSVSGQDGSSQRPT) are enriched in polar residues. Positions 1169-1180 (AGKPVVAAPGAG) are enriched in low complexity.

This sequence belongs to the FILIP1 family. As to quaternary structure, interacts with FLNA. Interacts with RHOD (in GTP-bound form).

The protein localises to the cytoplasm. Its subcellular location is the cytoskeleton. Its function is as follows. By acting through a filamin-A/F-actin axis, it controls the start of neocortical cell migration from the ventricular zone. May be able to induce the degradation of filamin-A. This chain is Filamin-A-interacting protein 1 (Filip1), found in Mus musculus (Mouse).